We begin with the raw amino-acid sequence, 78 residues long: Lantibiotic cinnamycin (78 aa).

Positions 1–59 (MTASILQQSVVDADFRAALLENPAAFGASAAALPTPVEAQDQASLDFWTKDIAATEAFA) are excised as a propeptide. Cross-links (beta-methyllanthionine (Cys-Thr)) lie at residues 60 to 77 (CRQS…DGNT) and 64 to 70 (CSFGPFT). Positions 63-73 (SCSFGPFTFVC) form a cross-link, lanthionine (Ser-Cys). Positions 65-78 (SFGPFTFVCDGNTK) form a cross-link, lysinoalanine (Ser-Lys). Aspartate 74 is subject to (3R)-3-hydroxyaspartate.

It belongs to the type B lantibiotic family. Maturation of lantibiotics involves the enzymatic conversion of Thr, and Ser into dehydrated AA and the formation of thioether bonds with cysteine or the formation of dialkylamine bonds with lysine. This is followed by membrane translocation and cleavage of the modified precursor.

Its function is as follows. Can act as inhibitor of the enzyme phospholipase A2, and of the angiotensin-converting enzyme. Shows inhibitory activities against herpes simplex virus and immunopotentiating activities. Its antimicrobial activities are not very pronounced. In Streptomyces griseoverticillatus (Streptoverticillium griseoverticillatum), this protein is Lantibiotic cinnamycin (cinA).